We begin with the raw amino-acid sequence, 106 residues long: Gibberellin-regulated protein 12 (106 aa).

Positions 1-22 (MMKLIVVFVISSLLFATQFSNG) are cleaved as a signal peptide.

This sequence belongs to the GASA family. In terms of processing, six disulfide bonds may be present.

The protein localises to the secreted. Functionally, gibberellin-regulated protein that may function in hormonal controlled steps of development such as seed germination, flowering and seed maturation. The sequence is that of Gibberellin-regulated protein 12 (GASA12) from Arabidopsis thaliana (Mouse-ear cress).